The following is a 302-amino-acid chain: Putative RING-H2 finger protein ATL35 (302 aa).

An N-terminal signal peptide occupies residues Met1–Cys31. The helical transmembrane segment at Thr50–Leu70 threads the bilayer. The segment at Cys123–Arg165 adopts an RING-type; atypical zinc-finger fold. A Phosphoserine modification is found at Ser226.

It belongs to the RING-type zinc finger family. ATL subfamily.

The protein resides in the membrane. The catalysed reaction is S-ubiquitinyl-[E2 ubiquitin-conjugating enzyme]-L-cysteine + [acceptor protein]-L-lysine = [E2 ubiquitin-conjugating enzyme]-L-cysteine + N(6)-ubiquitinyl-[acceptor protein]-L-lysine.. It participates in protein modification; protein ubiquitination. This Arabidopsis thaliana (Mouse-ear cress) protein is Putative RING-H2 finger protein ATL35 (ATL35).